The primary structure comprises 711 residues: DNA ligase (711 aa).

The disordered stretch occupies residues 1–29; the sequence is MSEDAIGQQVPAAQEAAAGAEPNSAARER. Positions 12–25 are enriched in low complexity; sequence AAQEAAAGAEPNSA. Residues 54–58, 103–104, and glutamate 133 contribute to the NAD(+) site; these read DAAFD and SL. Lysine 135 serves as the catalytic N6-AMP-lysine intermediate. NAD(+) contacts are provided by arginine 156, glutamate 197, lysine 313, and lysine 337. Residues cysteine 431, cysteine 434, cysteine 450, and cysteine 456 each coordinate Zn(2+). Residues 620 to 709 enclose the BRCT domain; the sequence is QGPRPLEGVT…PEAARAVARV (90 aa).

The protein belongs to the NAD-dependent DNA ligase family. LigA subfamily. The cofactor is Mg(2+). Mn(2+) serves as cofactor.

It carries out the reaction NAD(+) + (deoxyribonucleotide)n-3'-hydroxyl + 5'-phospho-(deoxyribonucleotide)m = (deoxyribonucleotide)n+m + AMP + beta-nicotinamide D-nucleotide.. Functionally, DNA ligase that catalyzes the formation of phosphodiester linkages between 5'-phosphoryl and 3'-hydroxyl groups in double-stranded DNA using NAD as a coenzyme and as the energy source for the reaction. It is essential for DNA replication and repair of damaged DNA. The protein is DNA ligase of Salinispora tropica (strain ATCC BAA-916 / DSM 44818 / JCM 13857 / NBRC 105044 / CNB-440).